Consider the following 525-residue polypeptide: BTB/POZ domain-containing protein 2 (525 aa).

The disordered stretch occupies residues 1–86; that stretch reads MAAGGSGGRA…AEEAAGPGAA (86 aa). Gly residues predominate over residues 16–26; the sequence is VGVGPGTGGSP. A compositionally biased stretch (low complexity) spans 27–55; the sequence is GPSANAAATPAPGNAAAAAAAAAAAAAAP. Positions 56–65 are enriched in pro residues; sequence GPTPPAPPGP. A compositionally biased stretch (low complexity) spans 66–86; that stretch reads GTDAQAAGAERAEEAAGPGAA. Residues 117 to 187 form the BTB domain; that stretch reads CDVHFLVGKG…LYSDEVQIGP (71 aa).

In terms of assembly, interacts with topoisomerase 1 and with TRIM5 isoform Delta.

The protein localises to the cytoplasm. This is BTB/POZ domain-containing protein 2 (BTBD2) from Homo sapiens (Human).